A 220-amino-acid polypeptide reads, in one-letter code: ATP synthase subunit delta (220 aa).

Belongs to the ATPase delta chain family. In terms of assembly, F-type ATPases have 2 components, F(1) - the catalytic core - and F(0) - the membrane proton channel. F(1) has five subunits: alpha(3), beta(3), gamma(1), delta(1), epsilon(1). F(0) has three main subunits: a(1), b(2) and c(10-14). The alpha and beta chains form an alternating ring which encloses part of the gamma chain. F(1) is attached to F(0) by a central stalk formed by the gamma and epsilon chains, while a peripheral stalk is formed by the delta and b chains.

The protein localises to the cell inner membrane. In terms of biological role, f(1)F(0) ATP synthase produces ATP from ADP in the presence of a proton or sodium gradient. F-type ATPases consist of two structural domains, F(1) containing the extramembraneous catalytic core and F(0) containing the membrane proton channel, linked together by a central stalk and a peripheral stalk. During catalysis, ATP synthesis in the catalytic domain of F(1) is coupled via a rotary mechanism of the central stalk subunits to proton translocation. Functionally, this protein is part of the stalk that links CF(0) to CF(1). It either transmits conformational changes from CF(0) to CF(1) or is implicated in proton conduction. The polypeptide is ATP synthase subunit delta (Gluconobacter oxydans (strain 621H) (Gluconobacter suboxydans)).